Here is a 310-residue protein sequence, read N- to C-terminus: Nucleotide-binding protein MAP_1147 (310 aa).

Glycine 30–glycine 37 is a binding site for ATP. Aspartate 81–serine 84 is a binding site for GTP.

The protein belongs to the RapZ-like family.

Functionally, displays ATPase and GTPase activities. This is Nucleotide-binding protein MAP_1147 from Mycolicibacterium paratuberculosis (strain ATCC BAA-968 / K-10) (Mycobacterium paratuberculosis).